Here is a 90-residue protein sequence, read N- to C-terminus: Cell division topological specificity factor (90 aa).

Belongs to the MinE family.

Its function is as follows. Prevents the cell division inhibition by proteins MinC and MinD at internal division sites while permitting inhibition at polar sites. This ensures cell division at the proper site by restricting the formation of a division septum at the midpoint of the long axis of the cell. This is Cell division topological specificity factor from Brucella abortus (strain S19).